We begin with the raw amino-acid sequence, 111 residues long: Disintegrin Eo1 subunit 1 (111 aa).

The signal sequence occupies residues 1–20; sequence MIQVLLVIICLAVFPYQGSS. Positions 21-46 are excised as a propeptide; that stretch reads IILESGNVNDFELVYPKKVTVLPTGA. A Disintegrin domain is found at 26–111; sequence GNVNDFELVY…SDCPRNPWKD (86 aa). 4 disulfide bridges follow: cysteine 53/cysteine 76, cysteine 67/cysteine 73, cysteine 72/cysteine 97, and cysteine 85/cysteine 104. The Cell attachment site; atypical (WGD) signature appears at 89-91; the sequence is WGD. A propeptide spanning residues 110-111 is cleaved from the precursor; that stretch reads KD.

The protein belongs to the disintegrin family. Dimeric disintegrin subfamily. In terms of assembly, heterodimer; disulfide-linked. Expressed by the venom gland.

The protein resides in the secreted. Its function is as follows. Poor inhibitor of platelet aggregation. The disintegrin inhibits the adhesion of cells expressing the RGD-dependent integrin alpha-5/beta-1 (ITGA5/ITGB1) to immobilized fibronectin. Inhibition on alpha-IIb/beta-3 (ITGA2B/ITGB3) is low. The polypeptide is Disintegrin Eo1 subunit 1 (Echis ocellatus (Ocellated saw-scaled viper)).